The primary structure comprises 404 residues: Cysteine desulfurase IscS (404 aa).

Residues alanine 75 to threonine 76, asparagine 155, glutamine 183, and serine 203 to histidine 205 contribute to the pyridoxal 5'-phosphate site. Residue lysine 206 is modified to N6-(pyridoxal phosphate)lysine. Pyridoxal 5'-phosphate is bound at residue threonine 243. Cysteine 328 serves as the catalytic Cysteine persulfide intermediate. Cysteine 328 is a [2Fe-2S] cluster binding site.

The protein belongs to the class-V pyridoxal-phosphate-dependent aminotransferase family. NifS/IscS subfamily. Homodimer. Forms a heterotetramer with IscU, interacts with other sulfur acceptors. It depends on pyridoxal 5'-phosphate as a cofactor.

It is found in the cytoplasm. It catalyses the reaction (sulfur carrier)-H + L-cysteine = (sulfur carrier)-SH + L-alanine. The protein operates within cofactor biosynthesis; iron-sulfur cluster biosynthesis. Its function is as follows. Master enzyme that delivers sulfur to a number of partners involved in Fe-S cluster assembly, tRNA modification or cofactor biosynthesis. Catalyzes the removal of elemental sulfur atoms from cysteine to produce alanine. Functions as a sulfur delivery protein for Fe-S cluster synthesis onto IscU, an Fe-S scaffold assembly protein, as well as other S acceptor proteins. In Haemophilus influenzae (strain PittGG), this protein is Cysteine desulfurase IscS.